Here is a 35-residue protein sequence, read N- to C-terminus: Photosystem II reaction center protein M (35 aa).

A helical membrane pass occupies residues 7–27 (GFLASLLFVLVPSVFLIVLYI).

Belongs to the PsbM family. PSII is composed of 1 copy each of membrane proteins PsbA, PsbB, PsbC, PsbD, PsbE, PsbF, PsbH, PsbI, PsbJ, PsbK, PsbL, PsbM, PsbT, PsbX, PsbY, PsbZ, Psb30/Ycf12, peripheral proteins PsbO, CyanoQ (PsbQ), PsbU, PsbV and a large number of cofactors. It forms dimeric complexes.

The protein resides in the cellular thylakoid membrane. In terms of biological role, one of the components of the core complex of photosystem II (PSII). PSII is a light-driven water:plastoquinone oxidoreductase that uses light energy to abstract electrons from H(2)O, generating O(2) and a proton gradient subsequently used for ATP formation. It consists of a core antenna complex that captures photons, and an electron transfer chain that converts photonic excitation into a charge separation. This subunit is found at the monomer-monomer interface. The sequence is that of Photosystem II reaction center protein M from Synechococcus elongatus (strain ATCC 33912 / PCC 7942 / FACHB-805) (Anacystis nidulans R2).